The chain runs to 1582 residues: Alpha-2-macroglobulin (1582 aa).

An N-terminal signal peptide occupies residues 1 to 15; that stretch reads MICLAALAVAVPARA. A cross-link (isoglutamyl cysteine thioester (Cys-Gln)) is located at residues 1080–1083; that stretch reads CAEQ.

This sequence belongs to the protease inhibitor I39 (alpha-2-macroglobulin) family. Bacterial alpha-2-macroglobulin subfamily.

In terms of biological role, protects the bacterial cell from host peptidases. This is Alpha-2-macroglobulin from Ralstonia nicotianae (strain ATCC BAA-1114 / GMI1000) (Ralstonia solanacearum).